A 176-amino-acid chain; its full sequence is Translation initiation factor IF-3 (176 aa).

It belongs to the IF-3 family. In terms of assembly, monomer.

The protein resides in the cytoplasm. IF-3 binds to the 30S ribosomal subunit and shifts the equilibrium between 70S ribosomes and their 50S and 30S subunits in favor of the free subunits, thus enhancing the availability of 30S subunits on which protein synthesis initiation begins. This chain is Translation initiation factor IF-3, found in Nitratidesulfovibrio vulgaris (strain ATCC 29579 / DSM 644 / CCUG 34227 / NCIMB 8303 / VKM B-1760 / Hildenborough) (Desulfovibrio vulgaris).